The sequence spans 483 residues: Glutamyl-tRNA(Gln) amidotransferase subunit A (483 aa).

Catalysis depends on charge relay system residues K77 and S152. S176 (acyl-ester intermediate) is an active-site residue.

Belongs to the amidase family. GatA subfamily. In terms of assembly, heterotrimer of A, B and C subunits.

The catalysed reaction is L-glutamyl-tRNA(Gln) + L-glutamine + ATP + H2O = L-glutaminyl-tRNA(Gln) + L-glutamate + ADP + phosphate + H(+). In terms of biological role, allows the formation of correctly charged Gln-tRNA(Gln) through the transamidation of misacylated Glu-tRNA(Gln) in organisms which lack glutaminyl-tRNA synthetase. The reaction takes place in the presence of glutamine and ATP through an activated gamma-phospho-Glu-tRNA(Gln). This is Glutamyl-tRNA(Gln) amidotransferase subunit A from Listeria monocytogenes serotype 4b (strain CLIP80459).